Reading from the N-terminus, the 429-residue chain is Adenylosuccinate synthetase (429 aa).

GTP is bound by residues 13–19 (GDEGKGK) and 41–43 (GHT). D14 serves as the catalytic Proton acceptor. The Mg(2+) site is built by D14 and G41. Residues 14 to 17 (DEGK), 39 to 42 (NAGH), T130, R144, Q225, T240, and R304 each bind IMP. H42 (proton donor) is an active-site residue. Residue 300-306 (ATTGRAR) coordinates substrate. Residues R306, 332 to 334 (KLD), and 413 to 415 (STG) each bind GTP.

Belongs to the adenylosuccinate synthetase family. In terms of assembly, homodimer. It depends on Mg(2+) as a cofactor.

The protein localises to the cytoplasm. The catalysed reaction is IMP + L-aspartate + GTP = N(6)-(1,2-dicarboxyethyl)-AMP + GDP + phosphate + 2 H(+). It participates in purine metabolism; AMP biosynthesis via de novo pathway; AMP from IMP: step 1/2. In terms of biological role, plays an important role in the de novo pathway of purine nucleotide biosynthesis. Catalyzes the first committed step in the biosynthesis of AMP from IMP. This chain is Adenylosuccinate synthetase, found in Pseudomonas fluorescens (strain SBW25).